Here is a 356-residue protein sequence, read N- to C-terminus: Histidinol-phosphate aminotransferase (356 aa).

K214 bears the N6-(pyridoxal phosphate)lysine mark.

It belongs to the class-II pyridoxal-phosphate-dependent aminotransferase family. Histidinol-phosphate aminotransferase subfamily. In terms of assembly, homodimer. The cofactor is pyridoxal 5'-phosphate.

It catalyses the reaction L-histidinol phosphate + 2-oxoglutarate = 3-(imidazol-4-yl)-2-oxopropyl phosphate + L-glutamate. Its pathway is amino-acid biosynthesis; L-histidine biosynthesis; L-histidine from 5-phospho-alpha-D-ribose 1-diphosphate: step 7/9. This Escherichia coli (strain SMS-3-5 / SECEC) protein is Histidinol-phosphate aminotransferase.